Reading from the N-terminus, the 514-residue chain is Serine--tRNA ligase, cytoplasmic (514 aa).

Met1 bears the N-acetylmethionine mark. Residues Arg9–Ser61 are interaction with tRNA. Ser241 is modified (phosphoserine). L-serine-binding residues include Thr271 and Arg302. Residues Arg302 to Glu304 and Val318 to Phe321 contribute to the ATP site. Lys323 bears the N6-acetyllysine mark. Glu325 is an L-serine binding site. Glu391–Ser394 contacts ATP. Asn427 contacts L-serine. Residues Val471–Ala514 form a disordered region. Positions Glu479–Leu502 are enriched in basic and acidic residues. The short motif at Lys482–Lys494 is the Nuclear localization signal element. Positions Arg505–Ala514 are enriched in polar residues.

This sequence belongs to the class-II aminoacyl-tRNA synthetase family. Type-1 seryl-tRNA synthetase subfamily. As to quaternary structure, homodimer. The tRNA molecule may bind across the dimer. Interacts with SIRT2. Interacts with METTL6; interaction is required for the tRNA N(3)-methylcytidine methyltransferase activity of METTL6.

The protein resides in the cytoplasm. The protein localises to the nucleus. The enzyme catalyses tRNA(Ser) + L-serine + ATP = L-seryl-tRNA(Ser) + AMP + diphosphate + H(+). The catalysed reaction is tRNA(Sec) + L-serine + ATP = L-seryl-tRNA(Sec) + AMP + diphosphate + H(+). Its pathway is aminoacyl-tRNA biosynthesis; selenocysteinyl-tRNA(Sec) biosynthesis; L-seryl-tRNA(Sec) from L-serine and tRNA(Sec): step 1/1. Functionally, catalyzes the attachment of serine to tRNA(Ser) in a two-step reaction: serine is first activated by ATP to form Ser-AMP and then transferred to the acceptor end of tRNA(Ser). Is probably also able to aminoacylate tRNA(Sec) with serine, to form the misacylated tRNA L-seryl-tRNA(Sec), which will be further converted into selenocysteinyl-tRNA(Sec). In the nucleus, binds to the VEGFA core promoter and prevents MYC binding and transcriptional activation by MYC. Recruits SIRT2 to the VEGFA promoter, promoting deacetylation of histone H4 at 'Lys-16' (H4K16). Thereby, inhibits the production of VEGFA and sprouting angiogenesis mediated by VEGFA. The protein is Serine--tRNA ligase, cytoplasmic (SARS1) of Macaca fascicularis (Crab-eating macaque).